Here is a 642-residue protein sequence, read N- to C-terminus: Threonine--tRNA ligase (642 aa).

In terms of domain architecture, TGS spans 1–65 (MSDIITVTLP…DEDVKLQIFT (65 aa)). Residues 248 to 541 (DHRKLGKELD…LIEHFAGAFP (294 aa)) form a catalytic region. Zn(2+) contacts are provided by Cys342, His393, and His518.

The protein belongs to the class-II aminoacyl-tRNA synthetase family. As to quaternary structure, homodimer. It depends on Zn(2+) as a cofactor.

The protein resides in the cytoplasm. It carries out the reaction tRNA(Thr) + L-threonine + ATP = L-threonyl-tRNA(Thr) + AMP + diphosphate + H(+). Its function is as follows. Catalyzes the attachment of threonine to tRNA(Thr) in a two-step reaction: L-threonine is first activated by ATP to form Thr-AMP and then transferred to the acceptor end of tRNA(Thr). Also edits incorrectly charged L-seryl-tRNA(Thr). This Myxococcus xanthus (strain DK1622) protein is Threonine--tRNA ligase.